Here is a 215-residue protein sequence, read N- to C-terminus: Pyrrolidone-carboxylate peptidase (215 aa).

Active-site residues include E80, C143, and H167.

This sequence belongs to the peptidase C15 family. Homotetramer.

It is found in the cytoplasm. The enzyme catalyses Release of an N-terminal pyroglutamyl group from a polypeptide, the second amino acid generally not being Pro.. Its function is as follows. Removes 5-oxoproline from various penultimate amino acid residues except L-proline. The polypeptide is Pyrrolidone-carboxylate peptidase (Bacillus thuringiensis (strain Al Hakam)).